The following is a 460-amino-acid chain: Chromosomal replication initiator protein DnaA (460 aa).

The interval 1 to 84 is domain I, interacts with DnaA modulators; the sequence is MAVSLWQQCI…RFDIGSRPSA (84 aa). A domain II region spans residues 84–123; that stretch reads AKKPEPAPVAAVRVPNPQTKASVGTSFNTTEPVVNANHRS. The tract at residues 124–340 is domain III, AAA+ region; the sequence is NINPTYQFDN…GALNRVIANA (217 aa). ATP contacts are provided by G168, G170, K171, and T172. Positions 341–460 are domain IV, binds dsDNA; that stretch reads NFTGRPITID…YANLIRTLSS (120 aa).

It belongs to the DnaA family. Oligomerizes as a right-handed, spiral filament on DNA at oriC.

The protein resides in the cytoplasm. Plays an essential role in the initiation and regulation of chromosomal replication. ATP-DnaA binds to the origin of replication (oriC) to initiate formation of the DNA replication initiation complex once per cell cycle. Binds the DnaA box (a 9 base pair repeat at the origin) and separates the double-stranded (ds)DNA. Forms a right-handed helical filament on oriC DNA; dsDNA binds to the exterior of the filament while single-stranded (ss)DNA is stabiized in the filament's interior. The ATP-DnaA-oriC complex binds and stabilizes one strand of the AT-rich DNA unwinding element (DUE), permitting loading of DNA polymerase. After initiation quickly degrades to an ADP-DnaA complex that is not apt for DNA replication. Binds acidic phospholipids. This Shewanella sp. (strain MR-7) protein is Chromosomal replication initiator protein DnaA.